A 190-amino-acid chain; its full sequence is Segregation and condensation protein B (190 aa).

It belongs to the ScpB family. Homodimer. Homodimerization may be required to stabilize the binding of ScpA to the Smc head domains. Component of a cohesin-like complex composed of ScpA, ScpB and the Smc homodimer, in which ScpA and ScpB bind to the head domain of Smc. The presence of the three proteins is required for the association of the complex with DNA.

The protein localises to the cytoplasm. In terms of biological role, participates in chromosomal partition during cell division. May act via the formation of a condensin-like complex containing Smc and ScpA that pull DNA away from mid-cell into both cell halves. The sequence is that of Segregation and condensation protein B from Bacillus cereus (strain ATCC 14579 / DSM 31 / CCUG 7414 / JCM 2152 / NBRC 15305 / NCIMB 9373 / NCTC 2599 / NRRL B-3711).